The primary structure comprises 427 residues: Adenylosuccinate synthetase (427 aa).

Residues 12-18 (GDEGKGK) and 40-42 (GHT) each bind GTP. Residue D13 is the Proton acceptor of the active site. The Mg(2+) site is built by D13 and G40. IMP-binding positions include 13–16 (DEGK), 38–41 (NAGH), T127, R141, Q222, T237, and R301. The active-site Proton donor is the H41. A substrate-binding site is contributed by 297–303 (VVTKRPR). GTP-binding positions include R303, 329 to 331 (SLD), and 411 to 413 (AVG).

It belongs to the adenylosuccinate synthetase family. In terms of assembly, homodimer. Mg(2+) serves as cofactor.

The protein resides in the cytoplasm. The catalysed reaction is IMP + L-aspartate + GTP = N(6)-(1,2-dicarboxyethyl)-AMP + GDP + phosphate + 2 H(+). The protein operates within purine metabolism; AMP biosynthesis via de novo pathway; AMP from IMP: step 1/2. Its function is as follows. Plays an important role in the de novo pathway of purine nucleotide biosynthesis. Catalyzes the first committed step in the biosynthesis of AMP from IMP. This chain is Adenylosuccinate synthetase, found in Leuconostoc mesenteroides subsp. mesenteroides (strain ATCC 8293 / DSM 20343 / BCRC 11652 / CCM 1803 / JCM 6124 / NCDO 523 / NBRC 100496 / NCIMB 8023 / NCTC 12954 / NRRL B-1118 / 37Y).